Here is a 189-residue protein sequence, read N- to C-terminus: ATP synthase subunit b (189 aa).

The chain crosses the membrane as a helical span at residues Pro38–Leu58.

This sequence belongs to the ATPase B chain family. As to quaternary structure, F-type ATPases have 2 components, F(1) - the catalytic core - and F(0) - the membrane proton channel. F(1) has five subunits: alpha(3), beta(3), gamma(1), delta(1), epsilon(1). F(0) has three main subunits: a(1), b(2) and c(10-14). The alpha and beta chains form an alternating ring which encloses part of the gamma chain. F(1) is attached to F(0) by a central stalk formed by the gamma and epsilon chains, while a peripheral stalk is formed by the delta and b chains.

Its subcellular location is the cell membrane. F(1)F(0) ATP synthase produces ATP from ADP in the presence of a proton or sodium gradient. F-type ATPases consist of two structural domains, F(1) containing the extramembraneous catalytic core and F(0) containing the membrane proton channel, linked together by a central stalk and a peripheral stalk. During catalysis, ATP synthesis in the catalytic domain of F(1) is coupled via a rotary mechanism of the central stalk subunits to proton translocation. Its function is as follows. Component of the F(0) channel, it forms part of the peripheral stalk, linking F(1) to F(0). In Mycoplasmopsis agalactiae (strain NCTC 10123 / CIP 59.7 / PG2) (Mycoplasma agalactiae), this protein is ATP synthase subunit b.